Here is a 237-residue protein sequence, read N- to C-terminus: Insulin-like growth factor-binding protein 4 (237 aa).

One can recognise an IGFBP N-terminal domain in the interval 2–82 (EAIHCPPCSE…VHGQGVCMEL (81 aa)). Intrachain disulfides connect Cys-6–Cys-32, Cys-9–Cys-34, Cys-17–Cys-35, Cys-23–Cys-38, Cys-46–Cys-59, and Cys-53–Cys-79. The N-linked (GlcNAc...) asparagine glycan is linked to Asn-104. 4 disulfide bridges follow: Cys-110-Cys-117, Cys-153-Cys-183, Cys-194-Cys-205, and Cys-207-Cys-228. Residues 150 to 228 (QGSCQSELHR…GLEPKGELDC (79 aa)) enclose the Thyroglobulin type-1 domain. Ser-234 is subject to Phosphoserine.

In terms of assembly, binds IGF2 more than IGF1. Post-translationally, there are two different molecular mass variants (29 kDa and 24 kDa forms). The 29 kDa form was shown to be N-glycosylated. In terms of tissue distribution, detected in adult ewe, liver &gt; kidney &gt; lung &gt;&gt; heart and also in several fetal tissues.

The protein localises to the secreted. Its function is as follows. IGF-binding proteins prolong the half-life of the IGFs and have been shown to either inhibit or stimulate the growth promoting effects of the IGFs on cell culture. They alter the interaction of IGFs with their cell surface receptors. This chain is Insulin-like growth factor-binding protein 4 (IGFBP4), found in Ovis aries (Sheep).